A 475-amino-acid polypeptide reads, in one-letter code: Aspartyl/glutamyl-tRNA(Asn/Gln) amidotransferase subunit B (475 aa).

This sequence belongs to the GatB/GatE family. GatB subfamily. Heterotrimer of A, B and C subunits.

The enzyme catalyses L-glutamyl-tRNA(Gln) + L-glutamine + ATP + H2O = L-glutaminyl-tRNA(Gln) + L-glutamate + ADP + phosphate + H(+). It carries out the reaction L-aspartyl-tRNA(Asn) + L-glutamine + ATP + H2O = L-asparaginyl-tRNA(Asn) + L-glutamate + ADP + phosphate + 2 H(+). Allows the formation of correctly charged Asn-tRNA(Asn) or Gln-tRNA(Gln) through the transamidation of misacylated Asp-tRNA(Asn) or Glu-tRNA(Gln) in organisms which lack either or both of asparaginyl-tRNA or glutaminyl-tRNA synthetases. The reaction takes place in the presence of glutamine and ATP through an activated phospho-Asp-tRNA(Asn) or phospho-Glu-tRNA(Gln). The chain is Aspartyl/glutamyl-tRNA(Asn/Gln) amidotransferase subunit B from Staphylococcus haemolyticus (strain JCSC1435).